A 356-amino-acid polypeptide reads, in one-letter code: Cyclin-D1-binding protein 1 (356 aa).

An N-acetylalanine modification is found at A2. 2 interaction with TCF3 regions span residues 2–181 and 147–356; these read ASST…VDFV and ISCN…AAEL. The interval 2-187 is interaction with RPLP0; the sequence is ASSTAAVPFL…VDFVKDAHEE (186 aa). The interval 2-205 is required for interaction with CCND1; sequence ASSTAAVPFL…DPYSGLLNDS (204 aa). Positions 198-224 are disordered; that stretch reads YSGLLNDSEDNSDSHSDEDGVLGLPSN. The tract at residues 236–356 is interaction with RPLP0; that stretch reads LIIPCLALVR…KALTQRAAEL (121 aa).

It belongs to the CCNDBP1 family. Interacts with CCND1 and GRAP2. May also interact with COPS5, RPLP0, SIRT6, SYF2 and TCF3. Post-translationally, phosphorylated. As to expression, expressed at high levels in brain, intestine, muscle and ovary and at lower levels in heart, kidney, liver, lung, spleen and testis.

Its subcellular location is the cytoplasm. It is found in the nucleus. In terms of biological role, may negatively regulate cell cycle progression. May act at least in part via inhibition of the cyclin-D1/CDK4 complex, thereby preventing phosphorylation of RB1 and blocking E2F-dependent transcription. May be required for hepatocyte proliferation. This Mus musculus (Mouse) protein is Cyclin-D1-binding protein 1 (Ccndbp1).